Here is a 173-residue protein sequence, read N- to C-terminus: Ribosome maturation factor RimM (173 aa).

The region spanning 97–170 (EHEYYYHEII…RIRVHIMEGL (74 aa)) is the PRC barrel domain.

Belongs to the RimM family. As to quaternary structure, binds ribosomal protein uS19.

Its subcellular location is the cytoplasm. Its function is as follows. An accessory protein needed during the final step in the assembly of 30S ribosomal subunit, possibly for assembly of the head region. Essential for efficient processing of 16S rRNA. May be needed both before and after RbfA during the maturation of 16S rRNA. It has affinity for free ribosomal 30S subunits but not for 70S ribosomes. This Shouchella clausii (strain KSM-K16) (Alkalihalobacillus clausii) protein is Ribosome maturation factor RimM.